A 396-amino-acid chain; its full sequence is Ribosomal RNA large subunit methyltransferase I (396 aa).

The region spanning 2–79 (AIRIKLKPGR…REEEIDREFF (78 aa)) is the PUA domain.

The protein belongs to the methyltransferase superfamily. RlmI family.

Its subcellular location is the cytoplasm. The enzyme catalyses cytidine(1962) in 23S rRNA + S-adenosyl-L-methionine = 5-methylcytidine(1962) in 23S rRNA + S-adenosyl-L-homocysteine + H(+). Its function is as follows. Specifically methylates the cytosine at position 1962 (m5C1962) of 23S rRNA. The sequence is that of Ribosomal RNA large subunit methyltransferase I from Shewanella oneidensis (strain ATCC 700550 / JCM 31522 / CIP 106686 / LMG 19005 / NCIMB 14063 / MR-1).